Here is a 107-residue protein sequence, read N- to C-terminus: U-scoloptoxin(19)-Sm1a (107 aa).

The N-terminal stretch at 1 to 20 (MRFLVSVAFLLTVSSLLVSG) is a signal peptide.

It belongs to the scoloptoxin-19 family. Post-translationally, contains 6 disulfide bonds. As to expression, expressed by the venom gland.

The protein resides in the secreted. The chain is U-scoloptoxin(19)-Sm1a from Scolopendra morsitans (Tanzanian blue ringleg centipede).